The primary structure comprises 153 residues: Large ribosomal subunit protein uL22 (153 aa).

Belongs to the universal ribosomal protein uL22 family. As to quaternary structure, part of the 50S ribosomal subunit.

In terms of biological role, this protein binds specifically to 23S rRNA. It makes multiple contacts with different domains of the 23S rRNA in the assembled 50S subunit and ribosome. The globular domain of the protein is located near the polypeptide exit tunnel on the outside of the subunit, while an extended beta-hairpin is found that lines the wall of the exit tunnel in the center of the 70S ribosome. In Methanococcus vannielii (strain ATCC 35089 / DSM 1224 / JCM 13029 / OCM 148 / SB), this protein is Large ribosomal subunit protein uL22.